We begin with the raw amino-acid sequence, 149 residues long: Transcriptional repressor NrdR (149 aa).

The segment at 3–34 is a zinc-finger region; it reads CPFCFAVDTKVIDSRLVGEGSSVRRRRQCLVC. Residues 49 to 139 form the ATP-cone domain; it reads PRVIKSNDVR…VYRSFEDIKD (91 aa).

This sequence belongs to the NrdR family. Requires Zn(2+) as cofactor.

Its function is as follows. Negatively regulates transcription of bacterial ribonucleotide reductase nrd genes and operons by binding to NrdR-boxes. The polypeptide is Transcriptional repressor NrdR (Salmonella schwarzengrund (strain CVM19633)).